The primary structure comprises 463 residues: MRQENDSLGIVLVPEDKLFGAQTGRSQEFFSYGKESMPLEIIHALVKIKKCAAKANGDLGCLDAKRRDMIVAATDEILSGEFDEHFPLKVWQTGSGTQSNMNVNEVIANLAIQRHGGELGSKHPVHPNDHVNKSQSSNDVFPTAMHIAAVQSIKGSLIPALEHLKKVIDAKALEFARDIKIGRTHLMDAVPMTLGQEFSGYSCQLHNCLERIGFSLTHLYELAIGGTAIGTGLNVPEGFVEKVIQYLRRETGEPFVPASNYFAALSNHDALVQAHGSLTVLACALVKIATDLSFLGSGPRCGLGEIFFPENEPGSSIMPGKINPTQSEALQMVCSQVIGNNQSIIFSGTKGNFELNVMKPVIIYDFLQSVNLLAGAMRSFADYFVCGLKVNKGQLQQNVERSLMLVTALAPVLGYDKCSKIALKAFHENLSLKEACVSLGFLSEKEFDEHVIPGLMVGNRGHE.

Substrate contacts are provided by residues 95-97 (SGT), 126-129 (HPND), 136-138 (SSN), and Thr-184. His-185 acts as the Proton donor/acceptor in catalysis. The active site involves Ser-315. Substrate-binding positions include Ser-316 and 321 to 323 (KIN).

The protein belongs to the class-II fumarase/aspartase family. Fumarase subfamily. As to quaternary structure, homotetramer.

Its subcellular location is the cytoplasm. The catalysed reaction is (S)-malate = fumarate + H2O. It functions in the pathway carbohydrate metabolism; tricarboxylic acid cycle; (S)-malate from fumarate: step 1/1. In terms of biological role, involved in the TCA cycle. Catalyzes the stereospecific interconversion of fumarate to L-malate. This chain is Fumarate hydratase class II, found in Chlamydia trachomatis serovar D (strain ATCC VR-885 / DSM 19411 / UW-3/Cx).